The primary structure comprises 258 residues: UPF0246 protein CGSHiGG_08495 (258 aa).

This sequence belongs to the UPF0246 family.

This is UPF0246 protein CGSHiGG_08495 from Haemophilus influenzae (strain PittGG).